We begin with the raw amino-acid sequence, 319 residues long: D-ribose/D-allose-binding protein (319 aa).

The signal sequence occupies residues 1-29 (MKRVASRRLLAAVVLTACSSFLPLSAVHA).

Belongs to the bacterial solute-binding protein 2 family.

The protein localises to the periplasm. Functionally, binds specifically both D-ribose and D-allose, with affinities in the lower micromolar range. The protein is D-ribose/D-allose-binding protein of Pseudomonas aeruginosa (strain ATCC 15692 / DSM 22644 / CIP 104116 / JCM 14847 / LMG 12228 / 1C / PRS 101 / PAO1).